Reading from the N-terminus, the 221-residue chain is Sugar transporter SWEET1 (221 aa).

7 helical membrane passes run 3–23, 44–63, 68–88, 102–122, 129–149, 160–180, and 186–206; these read AGGV…LGMF, FLPF…YGVL, TLII…LAYL, ATLL…VPDL, LGLF…ADLA, LSFS…IYGF, and YITV…VLFY. One can recognise a MtN3/slv 1 domain in the interval 10–94; it reads FLSSACVLFT…LAYLHYSPQK (85 aa). Residues 127 to 212 enclose the MtN3/slv 2 domain; it reads QQLGLFCSVF…VLFYKYPPEQ (86 aa). The segment at 149–221 is mediates interaction with TRPV2; that stretch reads AKIIQTKSTQ…QDTKYRLLQT (73 aa).

It belongs to the SWEET sugar transporter family. Interacts with TRPV2; the interaction probably occurs intracellularly and depends on TRPV2 N-glycosylation.

The protein resides in the golgi apparatus membrane. The protein localises to the cell membrane. In terms of biological role, mediates sugar transport across membranes. May stimulate V(D)J recombination by the activation of RAG1. The polypeptide is Sugar transporter SWEET1 (Slc50a1) (Rattus norvegicus (Rat)).